A 914-amino-acid polypeptide reads, in one-letter code: TRPM8 channel-associated factor 3 (914 aa).

A Peptidase M60 domain is found at 533 to 832 (NSWVSTGLYL…TYLQLQEGFG (300 aa)).

Belongs to the TCAF family. As to expression, prostate-specific. Present in both dorso-lateral and anterior prostate.

In terms of biological role, may play a role in the regulation of the cation channel TRPM8 activity. This is TRPM8 channel-associated factor 3 from Mus musculus (Mouse).